A 316-amino-acid chain; its full sequence is Cell division protein ZipA (316 aa).

Residues methionine 1–arginine 5 lie on the Periplasmic side of the membrane. The chain crosses the membrane as a helical span at residues phenylalanine 6–serine 26. Over serine 27–alanine 316 the chain is Cytoplasmic. The disordered stretch occupies residues glycine 36–aspartate 65. A compositionally biased stretch (basic and acidic residues) spans glycine 41–arginine 57.

It belongs to the ZipA family. As to quaternary structure, interacts with FtsZ via their C-terminal domains.

The protein resides in the cell inner membrane. In terms of biological role, essential cell division protein that stabilizes the FtsZ protofilaments by cross-linking them and that serves as a cytoplasmic membrane anchor for the Z ring. Also required for the recruitment to the septal ring of downstream cell division proteins. This chain is Cell division protein ZipA, found in Vibrio parahaemolyticus serotype O3:K6 (strain RIMD 2210633).